We begin with the raw amino-acid sequence, 346 residues long: Structure-specific endonuclease subunit SLX1 (346 aa).

A GIY-YIG domain is found at 22-105 (DFYGVYLLRS…QHPYQTRHIK (84 aa)). The segment at 216-306 (CFICNETIDY…TPLQGKCLSC (91 aa)) adopts an SLX1-type zinc-finger fold.

The protein belongs to the SLX1 family. In terms of assembly, forms a heterodimer with SLX4. Requires a divalent metal cation as cofactor.

It localises to the nucleus. Functionally, catalytic subunit of the SLX1-SLX4 structure-specific endonuclease that resolves DNA secondary structures generated during DNA repair and recombination. Has endonuclease activity towards branched DNA substrates, introducing single-strand cuts in duplex DNA close to junctions with ss-DNA. The polypeptide is Structure-specific endonuclease subunit SLX1 (Debaryomyces hansenii (strain ATCC 36239 / CBS 767 / BCRC 21394 / JCM 1990 / NBRC 0083 / IGC 2968) (Yeast)).